The primary structure comprises 218 residues: Large ribosomal subunit protein uL3 (218 aa).

It belongs to the universal ribosomal protein uL3 family. In terms of assembly, part of the 50S ribosomal subunit. Forms a cluster with proteins L14 and L19.

Its function is as follows. One of the primary rRNA binding proteins, it binds directly near the 3'-end of the 23S rRNA, where it nucleates assembly of the 50S subunit. This chain is Large ribosomal subunit protein uL3, found in Corynebacterium jeikeium (strain K411).